The following is a 296-amino-acid chain: NADH-cytochrome b5 reductase 2-A (296 aa).

A helical membrane pass occupies residues 15 to 35 (FVIGAPTIALCSYYYSSGAFL). The FAD-binding FR-type domain occupies 47 to 151 (NNWIDLPISR…KGPIPKWKWV (105 aa)). 154-189 (SFESITLIGGGTGITPLYQLIHAITKNPNDKTKIRL) contributes to the FAD binding site.

Belongs to the flavoprotein pyridine nucleotide cytochrome reductase family. FAD serves as cofactor.

It localises to the mitochondrion outer membrane. The enzyme catalyses 2 Fe(III)-[cytochrome b5] + NADH = 2 Fe(II)-[cytochrome b5] + NAD(+) + H(+). Functionally, may mediate the reduction of outer membrane cytochrome b5. In Vanderwaltozyma polyspora (strain ATCC 22028 / DSM 70294 / BCRC 21397 / CBS 2163 / NBRC 10782 / NRRL Y-8283 / UCD 57-17) (Kluyveromyces polysporus), this protein is NADH-cytochrome b5 reductase 2-A (MCR1A).